Here is a 613-residue protein sequence, read N- to C-terminus: Dihydroxy-acid dehydratase (613 aa).

D81 lines the Mg(2+) pocket. Residue C122 participates in [2Fe-2S] cluster binding. Mg(2+) contacts are provided by D123 and K124. At K124 the chain carries N6-carboxylysine. [2Fe-2S] cluster is bound at residue C195. E491 provides a ligand contact to Mg(2+). The Proton acceptor role is filled by S517.

This sequence belongs to the IlvD/Edd family. As to quaternary structure, homodimer. Requires [2Fe-2S] cluster as cofactor. The cofactor is Mg(2+).

It carries out the reaction (2R)-2,3-dihydroxy-3-methylbutanoate = 3-methyl-2-oxobutanoate + H2O. It catalyses the reaction (2R,3R)-2,3-dihydroxy-3-methylpentanoate = (S)-3-methyl-2-oxopentanoate + H2O. The protein operates within amino-acid biosynthesis; L-isoleucine biosynthesis; L-isoleucine from 2-oxobutanoate: step 3/4. Its pathway is amino-acid biosynthesis; L-valine biosynthesis; L-valine from pyruvate: step 3/4. Functionally, functions in the biosynthesis of branched-chain amino acids. Catalyzes the dehydration of (2R,3R)-2,3-dihydroxy-3-methylpentanoate (2,3-dihydroxy-3-methylvalerate) into 2-oxo-3-methylpentanoate (2-oxo-3-methylvalerate) and of (2R)-2,3-dihydroxy-3-methylbutanoate (2,3-dihydroxyisovalerate) into 2-oxo-3-methylbutanoate (2-oxoisovalerate), the penultimate precursor to L-isoleucine and L-valine, respectively. This Vibrio vulnificus (strain CMCP6) protein is Dihydroxy-acid dehydratase.